Reading from the N-terminus, the 137-residue chain is Leaf-specific thionin DB4 (137 aa).

A signal peptide spans 1-28 (MAPSKSIKSVVICVLILGLVLEQVQVEG). 4 disulfide bridges follow: Cys-31-Cys-68, Cys-32-Cys-60, Cys-40-Cys-58, and Cys-44-Cys-54. Positions 75–137 (LNLLPESGEP…DGAVIQSVEA (63 aa)) are cleaved as a propeptide — acidic domain.

The protein belongs to the plant thionin (TC 1.C.44) family. 4 C-C subfamily.

The protein resides in the secreted. Functionally, thionins are small plant proteins which are toxic to animal cells. They seem to exert their toxic effect at the level of the cell membrane. Their precise function is not known. The sequence is that of Leaf-specific thionin DB4 (THI1.3) from Hordeum vulgare (Barley).